A 201-amino-acid chain; its full sequence is MSTARFIKCVTVGDGAVGKTCMLISYTSNTFPTDYVPTVFDNFSANVVVDGSTVNLGLWDTAGQEDYNRLRPLSYRGADVFLLAFSLISKASYENIHKKWLPELKHYAPGIPIVLVGTKLDLRDDKQFLKDHPGAASITTAQGEELRKMIGAVRYLECSSKTQQNVKAVFDTAIRVALRPPKAKKKIKPLKTKRSRICFFL.

13–20 (GDGAVGKT) serves as a coordination point for GTP. The Effector region signature appears at 35–43 (YVPTVFDNF). Residues 60–64 (DTAGQ) and 118–121 (TKLD) contribute to the GTP site. A Cysteine methyl ester modification is found at C198. The S-geranylgeranyl cysteine moiety is linked to residue C198. Positions 199–201 (FFL) are cleaved as a propeptide — removed in mature form.

The protein belongs to the small GTPase superfamily. Rho family. As to expression, expressed exclusively in the root, hypocotyl and stem.

It localises to the cytoplasm. It is found in the membrane. Functionally, inactive GDP-bound Rho GTPases reside in the cytosol, are found in a complex with Rho GDP-dissociation inhibitors (Rho GDIs), and are released from the GDI protein in order to translocate to membranes upon activation. In Arabidopsis thaliana (Mouse-ear cress), this protein is Rac-like GTP-binding protein ARAC2 (ARAC2).